The following is a 408-amino-acid chain: Peptidase T (408 aa).

Position 78 (His-78) interacts with Zn(2+). Asp-80 is a catalytic residue. Asp-141 provides a ligand contact to Zn(2+). Residue Glu-175 is the Proton acceptor of the active site. Zn(2+) contacts are provided by Glu-176, Asp-198, and His-380.

This sequence belongs to the peptidase M20B family. Zn(2+) serves as cofactor.

It localises to the cytoplasm. The catalysed reaction is Release of the N-terminal residue from a tripeptide.. Cleaves the N-terminal amino acid of tripeptides. In Clostridium botulinum (strain Langeland / NCTC 10281 / Type F), this protein is Peptidase T.